We begin with the raw amino-acid sequence, 79 residues long: RNA-binding protein Hfq (79 aa).

The Sm domain occupies Asp-10–Ile-70.

This sequence belongs to the Hfq family. In terms of assembly, homohexamer.

Functionally, RNA chaperone that binds small regulatory RNA (sRNAs) and mRNAs to facilitate mRNA translational regulation in response to envelope stress, environmental stress and changes in metabolite concentrations. Also binds with high specificity to tRNAs. In Ruegeria pomeroyi (strain ATCC 700808 / DSM 15171 / DSS-3) (Silicibacter pomeroyi), this protein is RNA-binding protein Hfq.